The chain runs to 20 residues: Conotoxin PnMLKM-D0211 (20 aa).

Residues 1–3 (VKR) constitute a propeptide that is removed on maturation. 3 cysteine pairs are disulfide-bonded: cysteine 4–cysteine 18, cysteine 5–cysteine 14, and cysteine 10–cysteine 17. Proline 16 is subject to 4-hydroxyproline. Residue tryptophan 19 is modified to Tryptophan amide.

It belongs to the conotoxin M superfamily. In terms of tissue distribution, expressed by the venom duct.

It localises to the secreted. This chain is Conotoxin PnMLKM-D0211, found in Conus pennaceus (Feathered cone).